Here is an 88-residue protein sequence, read N- to C-terminus: MKRSRFTEEQIIGILREQEAGVATAEVCRRHGVSSATFYKWKAKFGGLDVSEARRLKALEDENARLKRMLADAMLDNVALKDLLGKKW.

The protein belongs to the transposase 8 family.

This Rhizobium sp protein is Insertion element ISR1 uncharacterized 10 kDa protein A3.